The sequence spans 401 residues: Argininosuccinate synthase (401 aa).

8-16 (AYSGGLDTS) lines the ATP pocket. Tyrosine 87 is an L-citrulline binding site. An ATP-binding site is contributed by glycine 117. L-aspartate-binding residues include threonine 119, asparagine 123, and aspartate 124. Asparagine 123 provides a ligand contact to L-citrulline. Residues arginine 127, serine 175, glutamate 259, and tyrosine 271 each coordinate L-citrulline.

Belongs to the argininosuccinate synthase family. Type 1 subfamily. Homotetramer.

Its subcellular location is the cytoplasm. It catalyses the reaction L-citrulline + L-aspartate + ATP = 2-(N(omega)-L-arginino)succinate + AMP + diphosphate + H(+). The protein operates within amino-acid biosynthesis; L-arginine biosynthesis; L-arginine from L-ornithine and carbamoyl phosphate: step 2/3. The sequence is that of Argininosuccinate synthase from Corynebacterium efficiens (strain DSM 44549 / YS-314 / AJ 12310 / JCM 11189 / NBRC 100395).